The following is a 490-amino-acid chain: Limb region 1 protein (490 aa).

Residues methionine 1 to arginine 19 are Extracellular-facing. A helical transmembrane segment spans residues glutamate 20–isoleucine 40. Over arginine 41–phenylalanine 62 the chain is Cytoplasmic. A helical transmembrane segment spans residues leucine 63–isoleucine 83. The Extracellular segment spans residues serine 84 to asparagine 110. The helical transmembrane segment at leucine 111 to leucine 131 threads the bilayer. Residues glutamate 132–leucine 151 are Cytoplasmic-facing. A helical membrane pass occupies residues valine 152 to isoleucine 172. Residues aspartate 173–glutamate 187 lie on the Extracellular side of the membrane. The chain crosses the membrane as a helical span at residues phenylalanine 188–cysteine 208. Over threonine 209–asparagine 291 the chain is Cytoplasmic. Residues serine 256 to alanine 287 are a coiled coil. The helical transmembrane segment at leucine 292 to valine 312 threads the bilayer. The Extracellular portion of the chain corresponds to alanine 313 to serine 339. The chain crosses the membrane as a helical span at residues leucine 340–valine 360. The Cytoplasmic portion of the chain corresponds to serine 361–threonine 383. A helical membrane pass occupies residues methionine 384 to methionine 404. Topologically, residues serine 405 to glycine 426 are extracellular. The helical transmembrane segment at asparagine 427 to isoleucine 447 threads the bilayer. The Cytoplasmic segment spans residues arginine 448 to leucine 490.

This sequence belongs to the LIMR family.

Its subcellular location is the membrane. Functionally, putative membrane receptor. This is Limb region 1 protein (Lmbr1) from Mus musculus (Mouse).